We begin with the raw amino-acid sequence, 219 residues long: Outer spore wall protein 4 (219 aa).

Residues 1–19 (MRFQLFIYFYFTIVVIAGT) form the signal peptide. At 20-170 (NTIQQFSDAG…KKKRLDRIKR (151 aa)) the chain is on the extracellular side. Asn-42, Asn-62, and Asn-136 each carry an N-linked (GlcNAc...) asparagine glycan. Residues 171-191 (ILTVSLLELGLAQGVADLCAV) traverse the membrane as a helical segment. The Cytoplasmic portion of the chain corresponds to 192-193 (AP). The helical transmembrane segment at 194–214 (FACLLGVTVGSIGFIFWLALI) threads the bilayer. Residues 215–219 (YNAIQ) are Extracellular-facing.

This sequence belongs to the OSW4/6 family. Post-translationally, N-glycosylated.

It is found in the membrane. Involved in spore wall assembly. May be involved in maintaining genome integrity. In Saccharomyces cerevisiae (strain ATCC 204508 / S288c) (Baker's yeast), this protein is Outer spore wall protein 4.